The primary structure comprises 252 residues: 5-oxoprolinase subunit A (252 aa).

The protein belongs to the LamB/PxpA family. In terms of assembly, forms a complex composed of PxpA, PxpB and PxpC.

It carries out the reaction 5-oxo-L-proline + ATP + 2 H2O = L-glutamate + ADP + phosphate + H(+). In terms of biological role, catalyzes the cleavage of 5-oxoproline to form L-glutamate coupled to the hydrolysis of ATP to ADP and inorganic phosphate. The polypeptide is 5-oxoprolinase subunit A (Corynebacterium glutamicum (strain R)).